Consider the following 492-residue polypeptide: Sestrin-1 (492 aa).

An N-terminal domain; may mediate the alkylhydroperoxide reductase activity region spans residues 71 to 252 (FADSFAALGR…ICDITNGNHS (182 aa)). Cys130 acts as the Cysteine sulfenic acid (-SOH) intermediate in catalysis. 2 positions are modified to phosphoserine: Ser293 and Ser314. The segment at 321–492 (PARDVSRHFE…ALRAITRYMT (172 aa)) is C-terminal domain; mediates TORC1 regulation. Residues 386 to 389 (TYNT), Thr398, and Glu463 contribute to the L-leucine site.

The protein belongs to the sestrin family. As to quaternary structure, interacts with the GATOR2 complex which is composed of MIOS, SEC13, SEH1L, WDR24 and WDR59; the interaction is negatively regulated by leucine. Interacts with RRAGA, RRAGB, RRAGC and RRAGD; may function as a guanine nucleotide dissociation inhibitor for RRAGs and regulate them. Interacts with KEAP1, RBX1 and SQSTM1; in the SQSTM1-dependent autophagic degradation of KEAP1. May interact with PRDX1. In terms of tissue distribution, highly expressed in heart and also detected in liver and skeletal muscles (at protein level).

The protein resides in the nucleus. Its subcellular location is the cytoplasm. It catalyses the reaction a hydroperoxide + L-cysteinyl-[protein] = S-hydroxy-L-cysteinyl-[protein] + an alcohol. Functions as an intracellular leucine sensor that negatively regulates the TORC1 signaling pathway through the GATOR complex. In absence of leucine, binds the GATOR subcomplex GATOR2 and prevents TORC1 signaling. Binding of leucine to SESN2 disrupts its interaction with GATOR2 thereby activating the TORC1 signaling pathway. This stress-inducible metabolic regulator may also play a role in protection against oxidative and genotoxic stresses. May positively regulate the transcription by NFE2L2 of genes involved in the response to oxidative stress by facilitating the SQSTM1-mediated autophagic degradation of KEAP1. Moreover, may prevent the accumulation of reactive oxygen species (ROS) through the alkylhydroperoxide reductase activity born by the N-terminal domain of the protein. Was originally reported to contribute to oxidative stress resistance by reducing PRDX1. However, this could not be confirmed. The protein is Sestrin-1 of Mus musculus (Mouse).